Consider the following 135-residue polypeptide: Photosystem II extrinsic protein V (135 aa).

Residues Cys-37, Cys-40, His-41, and His-92 each coordinate heme c.

This sequence belongs to the cytochrome c family. PsbV subfamily. PSII is composed of 1 copy each of membrane proteins PsbA, PsbB, PsbC, PsbD, PsbE, PsbF, PsbH, PsbI, PsbJ, PsbK, PsbL, PsbM, PsbT, PsbX, PsbY, PsbZ, Psb30/Ycf12, peripheral proteins PsbO, CyanoQ (PsbQ), PsbU, PsbV and a large number of cofactors. It forms dimeric complexes. Heme c serves as cofactor.

Its subcellular location is the cellular thylakoid membrane. In terms of biological role, one of the extrinsic, lumenal subunits of photosystem II (PSII). PSII is a light-driven water plastoquinone oxidoreductase, using light energy to abstract electrons from H(2)O, generating a proton gradient subsequently used for ATP formation. The extrinsic proteins stabilize the structure of photosystem II oxygen-evolving complex (OEC), the ion environment of oxygen evolution and protect the OEC against heat-induced inactivation. Low-potential cytochrome c that plays a role in the OEC of PSII. This chain is Photosystem II extrinsic protein V, found in Microcystis aeruginosa.